The primary structure comprises 436 residues: MSVNYSEDNNRTAVVVGLQFGDEGKGKITDFLSESYDVVVRFNGGTNAGHTVVVGNETYKFHLLPSGSLRTKVVVLGSGMVIDPQSLISEIEIVKKNNSNLAVVVSSNAHVVTKIHKYLDVEEEKIRSSMVIGTTAQGIGPTYEDKYARSGLRMIDLLDYKTIIEKLDIIYRMHENLLSRSEFSDPSVRENLAKELYSYGQELKKYMYYTDILINKLYNEGRTILFEGAQGVLLDPDFGFYPYVTSSNTISASSYTGTGFSMRKIKKVIGVAKAYVSKVGAGPFPTELNDDLAKKIRDAGGEYGTTTGRPRRVGWLDVPLLKYAVQIDDVDEIALTKVDTLGILHTIKVCYSYELDGKQIDYIPKHISEVSRVKPLYEEFEGWGDLSSSLLHPKMRKWEIPQQLRRYIDFIEEQIGRPVTIISSGKDRSKTVRIER.

GTP-binding positions include 21–27 (GDEGKGK) and 49–51 (GHT). D22 acts as the Proton acceptor in catalysis. Residues D22 and G49 each coordinate Mg(2+). IMP-binding positions include 22-25 (DEGK), 47-50 (NAGH), T135, R149, Q230, T245, and R309. The active-site Proton donor is H50. Substrate is bound at residue 305 to 311 (TTTGRPR). GTP is bound by residues R311, 337–339 (KVD), and 423–425 (SSG).

The protein belongs to the adenylosuccinate synthetase family. In terms of assembly, homodimer. It depends on Mg(2+) as a cofactor.

It localises to the cytoplasm. It catalyses the reaction IMP + L-aspartate + GTP = N(6)-(1,2-dicarboxyethyl)-AMP + GDP + phosphate + 2 H(+). The protein operates within purine metabolism; AMP biosynthesis via de novo pathway; AMP from IMP: step 1/2. Its function is as follows. Plays an important role in the de novo pathway of purine nucleotide biosynthesis. Catalyzes the first committed step in the biosynthesis of AMP from IMP. The protein is Adenylosuccinate synthetase of Thermoplasma volcanium (strain ATCC 51530 / DSM 4299 / JCM 9571 / NBRC 15438 / GSS1).